The following is a 450-amino-acid chain: Cysteine protease ATG4C (450 aa).

Cys-112 (nucleophile) is an active-site residue. Catalysis depends on residues Asp-336 and His-338.

Belongs to the peptidase C54 family.

The protein localises to the cytoplasm. It carries out the reaction [protein]-C-terminal L-amino acid-glycyl-phosphatidylethanolamide + H2O = [protein]-C-terminal L-amino acid-glycine + a 1,2-diacyl-sn-glycero-3-phosphoethanolamine. In terms of biological role, cysteine protease that plays a key role in autophagy by mediating both proteolytic activation and delipidation of ATG8 family proteins. The protease activity is required for proteolytic activation of ATG8 family proteins: cleaves the C-terminal amino acid of ATG8 proteins to reveal a C-terminal glycine. Exposure of the glycine at the C-terminus is essential for ATG8 proteins conjugation to phosphatidylethanolamine (PE) and insertion to membranes, which is necessary for autophagy. In addition to the protease activity, also mediates delipidation of ATG8 family proteins. Catalyzes delipidation of PE-conjugated forms of ATG8 proteins during macroautophagy. This chain is Cysteine protease ATG4C, found in Xenopus tropicalis (Western clawed frog).